Reading from the N-terminus, the 285-residue chain is Putative hydrolase DDAH2 (285 aa).

His-171 serves as the catalytic Proton donor. Cys-276 functions as the Nucleophile in the catalytic mechanism.

This sequence belongs to the DDAH family. Post-translationally, phosphorylated by TBK1. Phosphorylation inhibits the translocation into the mitochondrion upon Sendai viral infection. As to expression, detected in heart, placenta, lung, liver, skeletal muscle, kidney and pancreas, and at very low levels in brain.

It localises to the cytoplasm. Its subcellular location is the mitochondrion. Putative hydrolase with unknown substrate. Does not hydrolyze N(G),N(G)-dimethyl-L-arginine (ADMA) which acts as an inhibitor of NOS. In endothelial cells, induces expression of vascular endothelial growth factor (VEGF) via phosphorylation of the transcription factor SP1 by PKA in a process that is independent of NO and NO synthase. Similarly, enhances pancreatic insulin secretion through SP1-mediated transcriptional up-regulation of secretagogin/SCGN, an insulin vesicle docking protein. Upon viral infection, relocates to mitochondria where it promotes mitochondrial fission through activation of DNM1L leading to the inhibition of innate response activation mediated by MAVS. In Homo sapiens (Human), this protein is Putative hydrolase DDAH2.